Here is a 274-residue protein sequence, read N- to C-terminus: Dermonecrotic toxin SdSicTox-betaIIB1bviii (274 aa).

H5 is an active-site residue. Residues E25 and D27 each contribute to the Mg(2+) site. The active-site Nucleophile is the H41. 2 disulfide bridges follow: C45–C51 and C47–C190. D85 is a Mg(2+) binding site.

It belongs to the arthropod phospholipase D family. Class II subfamily. It depends on Mg(2+) as a cofactor. Expressed by the venom gland.

It is found in the secreted. The enzyme catalyses an N-(acyl)-sphingosylphosphocholine = an N-(acyl)-sphingosyl-1,3-cyclic phosphate + choline. The catalysed reaction is an N-(acyl)-sphingosylphosphoethanolamine = an N-(acyl)-sphingosyl-1,3-cyclic phosphate + ethanolamine. It catalyses the reaction a 1-acyl-sn-glycero-3-phosphocholine = a 1-acyl-sn-glycero-2,3-cyclic phosphate + choline. It carries out the reaction a 1-acyl-sn-glycero-3-phosphoethanolamine = a 1-acyl-sn-glycero-2,3-cyclic phosphate + ethanolamine. In terms of biological role, dermonecrotic toxins cleave the phosphodiester linkage between the phosphate and headgroup of certain phospholipids (sphingolipid and lysolipid substrates), forming an alcohol (often choline) and a cyclic phosphate. This toxin acts on sphingomyelin (SM). It may also act on ceramide phosphoethanolamine (CPE), lysophosphatidylcholine (LPC) and lysophosphatidylethanolamine (LPE), but not on lysophosphatidylserine (LPS), and lysophosphatidylglycerol (LPG). It acts by transphosphatidylation, releasing exclusively cyclic phosphate products as second products. Induces dermonecrosis, hemolysis, increased vascular permeability, edema, inflammatory response, and platelet aggregation. This Sicarius cf. damarensis (strain GJB-2008) (Six-eyed sand spider) protein is Dermonecrotic toxin SdSicTox-betaIIB1bviii.